A 648-amino-acid polypeptide reads, in one-letter code: Phosphomethylpyrimidine synthase (648 aa).

Substrate is bound by residues Asn-253, Met-282, Tyr-311, His-347, 367 to 369, 408 to 411, and Glu-447; these read SRG and DGLR. His-451 is a Zn(2+) binding site. Substrate is bound at residue Tyr-474. His-515 is a Zn(2+) binding site. [4Fe-4S] cluster-binding residues include Cys-595, Cys-598, and Cys-603.

The protein belongs to the ThiC family. As to quaternary structure, homodimer. Requires [4Fe-4S] cluster as cofactor.

The catalysed reaction is 5-amino-1-(5-phospho-beta-D-ribosyl)imidazole + S-adenosyl-L-methionine = 4-amino-2-methyl-5-(phosphooxymethyl)pyrimidine + CO + 5'-deoxyadenosine + formate + L-methionine + 3 H(+). It participates in cofactor biosynthesis; thiamine diphosphate biosynthesis. In terms of biological role, catalyzes the synthesis of the hydroxymethylpyrimidine phosphate (HMP-P) moiety of thiamine from aminoimidazole ribotide (AIR) in a radical S-adenosyl-L-methionine (SAM)-dependent reaction. The sequence is that of Phosphomethylpyrimidine synthase from Burkholderia thailandensis (strain ATCC 700388 / DSM 13276 / CCUG 48851 / CIP 106301 / E264).